The chain runs to 400 residues: Probable tRNA pseudouridine synthase D (400 aa).

The active-site Nucleophile is the Asp89. In terms of domain architecture, TRUD spans 162–357; sequence GVPNYYGLQR…AGGDRKPALL (196 aa).

The protein belongs to the pseudouridine synthase TruD family.

It catalyses the reaction uridine(13) in tRNA = pseudouridine(13) in tRNA. Functionally, could be responsible for synthesis of pseudouridine from uracil-13 in transfer RNAs. In Methanopyrus kandleri (strain AV19 / DSM 6324 / JCM 9639 / NBRC 100938), this protein is Probable tRNA pseudouridine synthase D.